The sequence spans 106 residues: Urease subunit beta (106 aa).

This sequence belongs to the urease beta subunit family. In terms of assembly, heterotrimer of UreA (gamma), UreB (beta) and UreC (alpha) subunits. Three heterotrimers associate to form the active enzyme.

It localises to the cytoplasm. It carries out the reaction urea + 2 H2O + H(+) = hydrogencarbonate + 2 NH4(+). It functions in the pathway nitrogen metabolism; urea degradation; CO(2) and NH(3) from urea (urease route): step 1/1. This is Urease subunit beta from Prochlorococcus marinus (strain AS9601).